The chain runs to 82 residues: Translational regulator CsrA (82 aa).

This sequence belongs to the CsrA/RsmA family. Homodimer; the beta-strands of each monomer intercalate to form a hydrophobic core while the alpha-helices form wings that extend away from the core. Each of the alpha-helical wings interacts with an FliW monomer, yielding a FliW-CsrA(2)-FliW complex.

Its subcellular location is the cytoplasm. A translational regulator that binds mRNA to regulate translation initiation and/or mRNA stability. Usually binds in the 5'-UTR at or near the Shine-Dalgarno sequence preventing ribosome-binding, thus repressing translation. Its main target seems to be the major flagellin gene, while its function is anatagonized by FliW. This Geobacillus thermodenitrificans (strain NG80-2) protein is Translational regulator CsrA.